The following is a 345-amino-acid chain: RING finger protein 228 (345 aa).

Positions 1–21 are enriched in low complexity; sequence MAAPASDSGGSQQSPSSSPGS. Residues 1-43 are disordered; sequence MAAPASDSGGSQQSPSSSPGSREGAGVAAKGAPDCGDAGARDA. Residues 58–125 form an RING-type zinc finger; sequence CKICYNYFDA…PGAIACPVCR (68 aa). The disordered stretch occupies residues 159 to 213; that stretch reads LPQDRLPPLPARLPAPAAAPPPTPAPPPPPSPAPPQPPPPPPAEDAAPGPRARPG. The segment covering 163–201 has biased composition (pro residues); the sequence is RLPPLPARLPAPAAAPPPTPAPPPPPSPAPPQPPPPPPA. Positions 202-213 are enriched in low complexity; it reads EDAAPGPRARPG. 2 consecutive transmembrane segments (helical) span residues 236–256 and 290–310; these read VCVV…LIFV and LSVA…ICWL. A disordered region spans residues 319–345; the sequence is AGSTGGSGGGGGPRARAAAGGARRSDT. Over residues 321 to 331 the composition is skewed to gly residues; that stretch reads STGGSGGGGGP. A compositionally biased stretch (low complexity) spans 332–345; sequence RARAAAGGARRSDT.

The protein localises to the membrane. In Homo sapiens (Human), this protein is RING finger protein 228.